Reading from the N-terminus, the 485-residue chain is N-succinylglutamate 5-semialdehyde dehydrogenase (485 aa).

Residue 220–225 (GSANTG) participates in NAD(+) binding. Active-site residues include Glu243 and Cys278.

The protein belongs to the aldehyde dehydrogenase family. AstD subfamily.

It carries out the reaction N-succinyl-L-glutamate 5-semialdehyde + NAD(+) + H2O = N-succinyl-L-glutamate + NADH + 2 H(+). It participates in amino-acid degradation; L-arginine degradation via AST pathway; L-glutamate and succinate from L-arginine: step 4/5. Its function is as follows. Catalyzes the NAD-dependent reduction of succinylglutamate semialdehyde into succinylglutamate. The chain is N-succinylglutamate 5-semialdehyde dehydrogenase from Vibrio atlanticus (strain LGP32) (Vibrio splendidus (strain Mel32)).